A 484-amino-acid chain; its full sequence is Iroquois-class homeodomain protein IRX-5 (484 aa).

The homeobox; TALE-type DNA-binding region spans 112 to 174 (DPAYRKNATR…NARRRLKKEN (63 aa)). Disordered stretches follow at residues 176–393 (MTWT…QCPF) and 424–443 (GHPG…FNGL). Residues 185-202 (EDEEEEENIDLEKNDEDE) show a composition bias toward acidic residues. Composition is skewed to basic and acidic residues over residues 203-212 (PQKPEDKGDL) and 249-265 (SDFK…ELPR). Ser273 is subject to Phosphoserine. Positions 318-328 (SPPPPPPPPPA) are enriched in pro residues. The segment covering 375 to 389 (SRASPAPAPARSPSA) has biased composition (low complexity). Residue Ser465 is modified to Phosphoserine.

This sequence belongs to the TALE/IRO homeobox family. Not expressed in the developing metanephric kidney or adult kidney.

The protein resides in the nucleus. Its function is as follows. Establishes the cardiac repolarization gradient by its repressive actions on the KCND2 potassium-channel gene. Required for retinal cone bipolar cell differentiation. May regulate contrast adaptation in the retina and control specific aspects of visual function in circuits of the mammalian retina. Involved in craniofacial and gonadal development. Modulates the migration of progenitor cell populations in branchial arches and gonads by repressing CXCL12. The chain is Iroquois-class homeodomain protein IRX-5 (Irx5) from Mus musculus (Mouse).